A 600-amino-acid polypeptide reads, in one-letter code: DNA repair and recombination protein mus-11 (600 aa).

The DNA-binding element occupies 148–152 (KRALR). The segment covering 268–319 (LNPQAQQSRPLSRSGSTGSLNTRQQPQNSHQFTARAQSRPPQQQLNSNQSRP) has biased composition (polar residues). 2 disordered regions span residues 268–357 (LNPQ…AGAA) and 387–600 (APKP…QRLA). Low complexity-rich tracts occupy residues 325–343 (NNSS…TTPQ) and 458–470 (ARSA…RAGP). Over residues 502-512 (GFSSSPSTNRG) the composition is skewed to polar residues. Composition is skewed to low complexity over residues 540-564 (SATT…APSA) and 577-591 (ANAS…ATSG).

The protein belongs to the RAD52 family. Part of a complex that includes mei-3/rad51 and mus-11/rad52.

It is found in the nucleus. Functionally, involved in DNA double-strand break (DSB) repair and recombination. Promotes the annealing of complementary single-stranded DNA and by stimulation of the mei-3/rad51 recombinase. This Neurospora crassa (strain ATCC 24698 / 74-OR23-1A / CBS 708.71 / DSM 1257 / FGSC 987) protein is DNA repair and recombination protein mus-11 (mus-11).